The chain runs to 82 residues: Small ribosomal subunit protein uS17 (82 aa).

It belongs to the universal ribosomal protein uS17 family. In terms of assembly, part of the 30S ribosomal subunit.

In terms of biological role, one of the primary rRNA binding proteins, it binds specifically to the 5'-end of 16S ribosomal RNA. The chain is Small ribosomal subunit protein uS17 from Pelobacter propionicus (strain DSM 2379 / NBRC 103807 / OttBd1).